The sequence spans 437 residues: Enolase (437 aa).

Position 166 (Q166) interacts with (2R)-2-phosphoglycerate. The active-site Proton donor is the E208. Mg(2+) contacts are provided by D245, E295, and D322. (2R)-2-phosphoglycerate contacts are provided by K347, R376, S377, and K398. K347 functions as the Proton acceptor in the catalytic mechanism.

Belongs to the enolase family. Mg(2+) is required as a cofactor.

It localises to the cytoplasm. The protein localises to the secreted. It is found in the cell surface. It catalyses the reaction (2R)-2-phosphoglycerate = phosphoenolpyruvate + H2O. Its pathway is carbohydrate degradation; glycolysis; pyruvate from D-glyceraldehyde 3-phosphate: step 4/5. In terms of biological role, catalyzes the reversible conversion of 2-phosphoglycerate (2-PG) into phosphoenolpyruvate (PEP). It is essential for the degradation of carbohydrates via glycolysis. The protein is Enolase of Lachnoclostridium phytofermentans (strain ATCC 700394 / DSM 18823 / ISDg) (Clostridium phytofermentans).